Here is a 308-residue protein sequence, read N- to C-terminus: HTH-type transcriptional activator AllS (308 aa).

The HTH lysR-type domain maps to 2–59; it reads FDPETLRTFISVAETGSFSKAAERLCKTTATISYRIKLLEENTGVGLFFRTTRSVSLT. The H-T-H motif DNA-binding region spans 19-38; the sequence is FSKAAERLCKTTATISYRIK.

This sequence belongs to the LysR transcriptional regulatory family.

In terms of biological role, positive regulator essential for the expression of allD operon. Binds to the allD promoter. This is HTH-type transcriptional activator AllS (allS) from Salmonella paratyphi A (strain ATCC 9150 / SARB42).